The sequence spans 606 residues: tRNA 5-methylaminomethyl-2-thiouridine biosynthesis bifunctional protein MnmC (606 aa).

Residues 1–237 are tRNA (mnm(5)s(2)U34)-methyltransferase; that stretch reads MNSNSSVQFN…KRDMLCGHYL (237 aa). Residues 254–606 are FAD-dependent cmnm(5)s(2)U34 oxidoreductase; that stretch reads IGGGISAACS…RRISVSRFKG (353 aa).

It in the N-terminal section; belongs to the methyltransferase superfamily. tRNA (mnm(5)s(2)U34)-methyltransferase family. This sequence in the C-terminal section; belongs to the DAO family. FAD serves as cofactor.

It is found in the cytoplasm. The enzyme catalyses 5-aminomethyl-2-thiouridine(34) in tRNA + S-adenosyl-L-methionine = 5-methylaminomethyl-2-thiouridine(34) in tRNA + S-adenosyl-L-homocysteine + H(+). Its function is as follows. Catalyzes the last two steps in the biosynthesis of 5-methylaminomethyl-2-thiouridine (mnm(5)s(2)U) at the wobble position (U34) in tRNA. Catalyzes the FAD-dependent demodification of cmnm(5)s(2)U34 to nm(5)s(2)U34, followed by the transfer of a methyl group from S-adenosyl-L-methionine to nm(5)s(2)U34, to form mnm(5)s(2)U34. The protein is tRNA 5-methylaminomethyl-2-thiouridine biosynthesis bifunctional protein MnmC of Idiomarina loihiensis (strain ATCC BAA-735 / DSM 15497 / L2-TR).